The following is a 138-amino-acid chain: MTCYKHGKAVFKGMGKTVEKYPLVIAEEANIPFLLNIPGTGRRIIGEIYSVDEQLLHFLDDFEGCPNWYQRTPQEIEILEWEGTDDSPDERPAANSIITCFVYSTTCYQPEWLQLPYHKCYDAFGNHGLRYIRHRDII.

The active-site Proton acceptor is the E63.

It belongs to the gamma-glutamylcyclotransferase family.

It carries out the reaction epsilon-(gamma-L-glutamyl)-L-lysine = 5-oxo-L-proline + L-lysine. Functionally, may contribute to degradation of proteins cross-linked by transglutaminases by degrading the cross-link between a lysine and a glutamic acid residue. Catalyzes the formation of 5-oxo-L-proline from L-gamma-glutamyl-L-epsilon-lysine. This Xenopus laevis (African clawed frog) protein is Gamma-glutamylaminecyclotransferase (ggact).